The following is a 48-amino-acid chain: MKKSLWLWGFTDSAETWNGRFAMIGFISVIFIEVVTGQGLLYLIGMMS.

Belongs to the ELIP/psbS family.

The protein localises to the plastid. It is found in the chloroplast. Functionally, possible role in chlorophyll and/or carotenoid binding. This is an uncharacterized protein from Pyropia yezoensis (Susabi-nori).